The primary structure comprises 236 residues: Small ribosomal subunit protein uS2c (236 aa).

The protein belongs to the universal ribosomal protein uS2 family.

Its subcellular location is the plastid. The protein localises to the chloroplast. The chain is Small ribosomal subunit protein uS2c (rps2) from Lolium perenne (Perennial ryegrass).